A 113-amino-acid chain; its full sequence is Large ribosomal subunit protein bL17 (113 aa).

This sequence belongs to the bacterial ribosomal protein bL17 family. As to quaternary structure, part of the 50S ribosomal subunit. Contacts protein L32.

The protein is Large ribosomal subunit protein bL17 of Clostridium botulinum (strain ATCC 19397 / Type A).